The following is a 180-amino-acid chain: FMN reductase (NADH) RutF (180 aa).

The protein belongs to the non-flavoprotein flavin reductase family. RutF subfamily.

It carries out the reaction FMNH2 + NAD(+) = FMN + NADH + 2 H(+). Its function is as follows. Catalyzes the reduction of FMN to FMNH2 which is used to reduce pyrimidine by RutA via the Rut pathway. In Bradyrhizobium diazoefficiens (strain JCM 10833 / BCRC 13528 / IAM 13628 / NBRC 14792 / USDA 110), this protein is FMN reductase (NADH) RutF.